We begin with the raw amino-acid sequence, 262 residues long: Small ribosomal subunit protein eS1y (262 aa).

The span at 1-18 (MAVGKNKRISKGRKGGKK) shows a compositional bias: basic residues. The disordered stretch occupies residues 1–21 (MAVGKNKRISKGRKGGKKKAV).

Belongs to the eukaryotic ribosomal protein eS1 family. Component of the small ribosomal subunit. Mature ribosomes consist of a small (40S) and a large (60S) subunit. The 40S subunit contains about 33 different proteins and 1 molecule of RNA (18S). The 60S subunit contains about 49 different proteins and 3 molecules of RNA (25S, 5.8S and 5S).

The protein localises to the cytoplasm. This Arabidopsis thaliana (Mouse-ear cress) protein is Small ribosomal subunit protein eS1y.